Here is a 114-residue protein sequence, read N- to C-terminus: MELNAFTILHIAVFIAVGYYANTHTTVTGSVEGKPNNPNEDIEVSYCRMNCTVENGVSSACSGDCVCVHRDNEPNGICVEITYFGDFGDPSQDPSIDEAAPRESVSKRRSNGES.

Residues 1–23 (MELNAFTILHIAVFIAVGYYANT) form the signal peptide. 3 disulfide bridges follow: C47/C65, C51/C67, and C61/C78. N-linked (GlcNAc...) asparagine glycosylation occurs at N50. The segment at 89-114 (DPSQDPSIDEAAPRESVSKRRSNGES) is disordered. Residues 99 to 114 (AAPRESVSKRRSNGES) are compositionally biased toward basic and acidic residues.

It localises to the secreted. Functionally, salivary chemokine-binding protein which binds to host chemokine CXCL8. The polypeptide is Evasin P1096 (Ixodes ricinus (Common tick)).